The chain runs to 311 residues: Putative ribose-phosphate pyrophosphokinase 2 (311 aa).

ATP is bound by residues 38–40 (DGE) and 97–98 (RQ). Positions 131 and 171 each coordinate Mg(2+). Asp219 serves as a coordination point for D-ribose 5-phosphate.

It belongs to the ribose-phosphate pyrophosphokinase family. Class I subfamily. As to quaternary structure, homohexamer. It depends on Mg(2+) as a cofactor.

The protein resides in the cytoplasm. It carries out the reaction D-ribose 5-phosphate + ATP = 5-phospho-alpha-D-ribose 1-diphosphate + AMP + H(+). The protein operates within metabolic intermediate biosynthesis; 5-phospho-alpha-D-ribose 1-diphosphate biosynthesis; 5-phospho-alpha-D-ribose 1-diphosphate from D-ribose 5-phosphate (route I): step 1/1. Functionally, involved in the biosynthesis of the central metabolite phospho-alpha-D-ribosyl-1-pyrophosphate (PRPP) via the transfer of pyrophosphoryl group from ATP to 1-hydroxyl of ribose-5-phosphate (Rib-5-P). The chain is Putative ribose-phosphate pyrophosphokinase 2 from Listeria innocua serovar 6a (strain ATCC BAA-680 / CLIP 11262).